An 81-amino-acid polypeptide reads, in one-letter code: MDPLTSAASVLSAALAIGLGSLGPGLGQGNAAAAAMEGLARQPEAEDKIRGNLLVSLAFMEALTIYGLVVALVLLFANPFA.

The next 2 membrane-spanning stretches (helical) occupy residues 7 to 27 and 57 to 77; these read AASVLSAALAIGLGSLGPGLG and LAFMEALTIYGLVVALVLLFA.

Belongs to the ATPase C chain family. F-type ATPases have 2 components, F(1) - the catalytic core - and F(0) - the membrane proton channel. F(1) has five subunits: alpha(3), beta(3), gamma(1), delta(1), epsilon(1). F(0) has four main subunits: a(1), b(1), b'(1) and c(10-14). The alpha and beta chains form an alternating ring which encloses part of the gamma chain. F(1) is attached to F(0) by a central stalk formed by the gamma and epsilon chains, while a peripheral stalk is formed by the delta, b and b' chains.

It is found in the cellular thylakoid membrane. F(1)F(0) ATP synthase produces ATP from ADP in the presence of a proton or sodium gradient. F-type ATPases consist of two structural domains, F(1) containing the extramembraneous catalytic core and F(0) containing the membrane proton channel, linked together by a central stalk and a peripheral stalk. During catalysis, ATP synthesis in the catalytic domain of F(1) is coupled via a rotary mechanism of the central stalk subunits to proton translocation. In terms of biological role, key component of the F(0) channel; it plays a direct role in translocation across the membrane. A homomeric c-ring of between 10-14 subunits forms the central stalk rotor element with the F(1) delta and epsilon subunits. This is ATP synthase subunit c from Synechococcus sp. (strain JA-3-3Ab) (Cyanobacteria bacterium Yellowstone A-Prime).